We begin with the raw amino-acid sequence, 317 residues long: MTDLPFTLDQLRILRAILIQGSFKKAATSLYISQPAVSSHVHNIEKQLNIQLFDRSHRNAQLTEAGQLLLKYGGRILALCEETCRALEDLQNLQCGNLIIGASQTTGTYLMPKLIGLFRQKYPQISVQLQVHSTRRISWSVANGQLDLAIIGGEVPKELTEILEVRNFVEDELTLILPPSHPFSKFSCIQKEDLYRLRFIALDKNSTIRKVIDKILNRNGIDSSRLKTEMELSSIEAIKNAVQSGLGASFVSISAIDKELKLQLLNRVNIDKIKIKRMLSIITNYSRYRSKASETFCHEILGLLVNLPFKNAPSTEK.

One can recognise an HTH lysR-type domain in the interval Phe6–Thr63. The segment at residues Phe23–His42 is a DNA-binding region (H-T-H motif).

Belongs to the LysR transcriptional regulatory family.

The protein localises to the plastid. It is found in the chloroplast. Its function is as follows. Trans-acting transcriptional regulator of RuBisCO genes (rbcL and rbcS) expression. This Cyanidium caldarium (Red alga) protein is Probable RuBisCO transcriptional regulator (rbcR).